A 648-amino-acid chain; its full sequence is UDP-galactose:fucoside alpha-3-galactosyltransferase (648 aa).

7 WD repeats span residues 320 to 358 (NHTD…GNDT), 372 to 420 (HKRG…IQTF), 422 to 461 (GHTG…FKRV), 464 to 505 (GHNG…NIIK), 507 to 546 (NQGG…NFND), 556 to 595 (NENS…NNNN), and 617 to 648 (HLNS…SWDL).

The protein belongs to the glycosyltransferase 77 family. It depends on Mn(2+) as a cofactor.

The protein localises to the cytoplasm. The enzyme catalyses an alpha-L-fucosyl-(1-&gt;2)-beta-D-galactosyl derivative + UDP-alpha-D-galactose = an alpha-D-galactosyl-(1-&gt;3)-[alpha-L-fucosyl-(1-&gt;2)]-beta-D-galactosyl derivative + UDP + H(+). It participates in protein modification; protein glycosylation. Its activity is regulated as follows. Stimulated by dithiothreitol (DTT) in vitro. Totally inhibited by EDTA. Specifically catalyzes the transfer of a galactosyl residue to the hydroxyproline-linked saccharide on Skp1 protein (fpaA/fpaB). Catalyzes the formation of a Gal-alpha-1,3-Fuc linkage, leading to Gal-Fuc-Gal-GlcNAc-HyPro143-Skp1. This chain is UDP-galactose:fucoside alpha-3-galactosyltransferase (agtA), found in Dictyostelium discoideum (Social amoeba).